An 878-amino-acid polypeptide reads, in one-letter code: Aconitate hydratase A (878 aa).

Residues Cys426, Cys492, and Cys495 each coordinate [4Fe-4S] cluster.

The protein belongs to the aconitase/IPM isomerase family. Monomer. Requires [4Fe-4S] cluster as cofactor.

The enzyme catalyses citrate = D-threo-isocitrate. It catalyses the reaction (2S,3R)-3-hydroxybutane-1,2,3-tricarboxylate = 2-methyl-cis-aconitate + H2O. Its pathway is carbohydrate metabolism; tricarboxylic acid cycle; isocitrate from oxaloacetate: step 2/2. It functions in the pathway organic acid metabolism; propanoate degradation. Its function is as follows. Involved in the catabolism of short chain fatty acids (SCFA) via the tricarboxylic acid (TCA)(acetyl degradation route) and probably the 2-methylcitrate cycle I (propionate degradation route). Catalyzes the reversible isomerization of citrate to isocitrate via cis-aconitate. Could catalyze the hydration of 2-methyl-cis-aconitate to yield (2R,3S)-2-methylisocitrate. The apo form of AcnA functions as a RNA-binding regulatory protein. The chain is Aconitate hydratase A (acnA) from Rickettsia prowazekii (strain Madrid E).